We begin with the raw amino-acid sequence, 180 residues long: ATP-dependent protease subunit HslV (180 aa).

Thr-10 is an active-site residue. Positions 165, 168, and 171 each coordinate Na(+).

The protein belongs to the peptidase T1B family. HslV subfamily. In terms of assembly, a double ring-shaped homohexamer of HslV is capped on each side by a ring-shaped HslU homohexamer. The assembly of the HslU/HslV complex is dependent on binding of ATP.

The protein localises to the cytoplasm. The enzyme catalyses ATP-dependent cleavage of peptide bonds with broad specificity.. With respect to regulation, allosterically activated by HslU binding. Functionally, protease subunit of a proteasome-like degradation complex believed to be a general protein degrading machinery. This chain is ATP-dependent protease subunit HslV, found in Koribacter versatilis (strain Ellin345).